We begin with the raw amino-acid sequence, 344 residues long: Phenylalanine--tRNA ligase alpha subunit (344 aa).

Glu259 is a Mg(2+) binding site.

The protein belongs to the class-II aminoacyl-tRNA synthetase family. Phe-tRNA synthetase alpha subunit type 1 subfamily. In terms of assembly, tetramer of two alpha and two beta subunits. The cofactor is Mg(2+).

The protein resides in the cytoplasm. The enzyme catalyses tRNA(Phe) + L-phenylalanine + ATP = L-phenylalanyl-tRNA(Phe) + AMP + diphosphate + H(+). The polypeptide is Phenylalanine--tRNA ligase alpha subunit (Nitrosospira multiformis (strain ATCC 25196 / NCIMB 11849 / C 71)).